The sequence spans 203 residues: Holliday junction branch migration complex subunit RuvA (203 aa).

Positions 1–64 (MIGRLRGIIL…EDAQLLYGFN (64 aa)) are domain I. The interval 65–142 (NKQERTLFKE…KGLHGDLFTP (78 aa)) is domain II. The segment at 143–154 (AVDLVLTSPASP) is flexible linker. Residues 155-203 (TSEDAEQEAVAALVALGYKPQEASRMVNKIARPDASSETLIRDALRAAL) form a domain III region.

The protein belongs to the RuvA family. In terms of assembly, homotetramer. Forms an RuvA(8)-RuvB(12)-Holliday junction (HJ) complex. HJ DNA is sandwiched between 2 RuvA tetramers; dsDNA enters through RuvA and exits via RuvB. An RuvB hexamer assembles on each DNA strand where it exits the tetramer. Each RuvB hexamer is contacted by two RuvA subunits (via domain III) on 2 adjacent RuvB subunits; this complex drives branch migration. In the full resolvosome a probable DNA-RuvA(4)-RuvB(12)-RuvC(2) complex forms which resolves the HJ.

The protein localises to the cytoplasm. Its function is as follows. The RuvA-RuvB-RuvC complex processes Holliday junction (HJ) DNA during genetic recombination and DNA repair, while the RuvA-RuvB complex plays an important role in the rescue of blocked DNA replication forks via replication fork reversal (RFR). RuvA specifically binds to HJ cruciform DNA, conferring on it an open structure. The RuvB hexamer acts as an ATP-dependent pump, pulling dsDNA into and through the RuvAB complex. HJ branch migration allows RuvC to scan DNA until it finds its consensus sequence, where it cleaves and resolves the cruciform DNA. The chain is Holliday junction branch migration complex subunit RuvA from Salmonella choleraesuis (strain SC-B67).